The sequence spans 540 residues: MTLKSLPAWTALQSHFEQIRHARLRDWFAPENDRAPTRAERFTIPGGGLAADFSKNRIDDETLRLLVQLARDAGVEARRDAMFAGEIVNPTEGRAALHTALRATDPQAPFHAQVSAERAKMATFARAVRSGTWTGYTGKRIRHVINIGIGGSDLGPKMVVHALHHVATPEISTHFVSNVDGADLARVLEQVDPEETLAIIVSKTFTTLETMTNARSLRDWFVARGCPEDALAKHFVGVSANPAEVVKFGIAADNVFEMWDWVGGRYSLWSAVGLSIMIAIGPEQFDELLAGANDMDRHFREAPLERNLPVLLGLIGIWYRNFFGSQSYLVAPYSEALHYLPSYLQQLEMESNGKSARLDGTFVDYPTSAVTWGEPGTNGQHAFFQMLHQGPTIVPIDFIAVLTPEHPLAGHHPKLLANCFAQSEALMLGRTLEEARKVAGPGKEALAPHLTFPGNRPTTTLLVDALTPRTLGALIALYEHKVLVQATVWDINPFDQWGVELGKILGKVVEGDLSAESVDPAKHDSSTTALIERARAALKR.

Glu-350 acts as the Proton donor in catalysis. Residues His-381 and Lys-503 contribute to the active site.

The protein belongs to the GPI family.

It is found in the cytoplasm. It catalyses the reaction alpha-D-glucose 6-phosphate = beta-D-fructose 6-phosphate. It functions in the pathway carbohydrate biosynthesis; gluconeogenesis. Its pathway is carbohydrate degradation; glycolysis; D-glyceraldehyde 3-phosphate and glycerone phosphate from D-glucose: step 2/4. In terms of biological role, catalyzes the reversible isomerization of glucose-6-phosphate to fructose-6-phosphate. The sequence is that of Glucose-6-phosphate isomerase from Burkholderia orbicola (strain AU 1054).